We begin with the raw amino-acid sequence, 336 residues long: Pyridoxal 5'-phosphate synthase subunit PdxS (336 aa).

Asp62 contacts D-ribose 5-phosphate. Lys119 serves as the catalytic Schiff-base intermediate with D-ribose 5-phosphate. Gly191 is a D-ribose 5-phosphate binding site. Lys203 is a binding site for D-glyceraldehyde 3-phosphate. D-ribose 5-phosphate is bound by residues Gly254 and 275–276; that span reads GS.

The protein belongs to the PdxS/SNZ family. In terms of assembly, in the presence of PdxT, forms a dodecamer of heterodimers.

The enzyme catalyses aldehydo-D-ribose 5-phosphate + D-glyceraldehyde 3-phosphate + L-glutamine = pyridoxal 5'-phosphate + L-glutamate + phosphate + 3 H2O + H(+). The protein operates within cofactor biosynthesis; pyridoxal 5'-phosphate biosynthesis. Functionally, catalyzes the formation of pyridoxal 5'-phosphate from ribose 5-phosphate (RBP), glyceraldehyde 3-phosphate (G3P) and ammonia. The ammonia is provided by the PdxT subunit. Can also use ribulose 5-phosphate and dihydroxyacetone phosphate as substrates, resulting from enzyme-catalyzed isomerization of RBP and G3P, respectively. The polypeptide is Pyridoxal 5'-phosphate synthase subunit PdxS (Pyrobaculum calidifontis (strain DSM 21063 / JCM 11548 / VA1)).